Reading from the N-terminus, the 614-residue chain is Zinc metalloproteinase-disintegrin-like VLAIP-B (614 aa).

A signal peptide spans 1-20; sequence MMQVLLVTICLAVFPYQGSS. A propeptide spanning residues 21-193 is cleaved from the precursor; it reads IILESGNVND…KASQLNLTPE (173 aa). At Gln-194 the chain carries Pyrrolidone carboxylic acid. Positions 202 to 398 constitute a Peptidase M12B domain; the sequence is KYVELVIVAD…KMPQCILNKP (197 aa). Residue Glu-205 coordinates Ca(2+). The N-linked (GlcNAc...) asparagine glycan is linked to Asn-262. Asp-289 lines the Ca(2+) pocket. Intrachain disulfides connect Cys-313/Cys-393, Cys-353/Cys-377, and Cys-355/Cys-360. His-338 contributes to the Zn(2+) binding site. Residue Glu-339 is part of the active site. Residues His-342 and His-348 each coordinate Zn(2+). Residues Cys-393, Asn-396, Val-408, Asn-411, Phe-413, Glu-415, Glu-418, and Asp-421 each coordinate Ca(2+). Residues 406–492 enclose the Disintegrin domain; it reads PAVCGNYFVE…ECPTDQFQRN (87 aa). Intrachain disulfides connect Cys-409-Cys-438, Cys-420-Cys-433, Cys-422-Cys-428, Cys-432-Cys-455, Cys-446-Cys-452, Cys-451-Cys-477, Cys-464-Cys-484, Cys-471-Cys-503, Cys-496-Cys-508, Cys-515-Cys-565, Cys-530-Cys-576, Cys-543-Cys-553, Cys-560-Cys-602, and Cys-596-Cys-607. The short motif at 470–472 is the D/ECD-tripeptide element; the sequence is ECD. N-linked (GlcNAc...) asparagine glycosylation is found at Asn-505, Asn-547, and Asn-568.

The protein belongs to the venom metalloproteinase (M12B) family. P-III subfamily. P-IIIc sub-subfamily. As to quaternary structure, heterodimer; disulfide-linked. The cofactor is Zn(2+). In terms of processing, the N-terminus is blocked. As to expression, expressed by the venom gland.

It localises to the secreted. Inhibited by EDTA or 1,10-phenanthroline. Not inhibited by PMSF. In terms of biological role, this metalloproteinase hydrolyzes azocasein, and insulin B-chain (at the '38-Ala-|-Leu-39' bond). Also hydrolyzes the Aalpha-chain (FGA) and more slowly the Bbeta-chain of fibrinogen (FGB), without affecting the gamma-chain. Cleaves alpha-chain of fibrinogen at '432-Lys-|-Leu-433' and '535-Pro-|-Met-536' bonds. Does not cleave fibrin. Inhibits endothelial cell adhesion to extracellular matrix proteins such as fibrinogen, fibronectin, vitronectin, collagen I, and collagen IV. Induces apoptosis in vascular endothelial cells. The polypeptide is Zinc metalloproteinase-disintegrin-like VLAIP-B (Macrovipera lebetinus (Levantine viper)).